A 476-amino-acid chain; its full sequence is Glycogen synthase (476 aa).

Lysine 15 contributes to the ADP-alpha-D-glucose binding site.

Belongs to the glycosyltransferase 1 family. Bacterial/plant glycogen synthase subfamily.

The enzyme catalyses [(1-&gt;4)-alpha-D-glucosyl](n) + ADP-alpha-D-glucose = [(1-&gt;4)-alpha-D-glucosyl](n+1) + ADP + H(+). The protein operates within glycan biosynthesis; glycogen biosynthesis. Synthesizes alpha-1,4-glucan chains using ADP-glucose. In Bacillus cereus (strain ATCC 10987 / NRS 248), this protein is Glycogen synthase.